A 736-amino-acid polypeptide reads, in one-letter code: Probable potassium transport system protein Kup 2 (736 aa).

Transmembrane regions (helical) follow at residues 1-21, 42-62, 84-104, 126-146, 156-176, 204-224, 239-259, 287-307, 334-354, 364-384, 390-410, and 414-434; these read MAIVALGVVYGDIGTSPLYTA, MLSLVFWSITLITTVKYVLIA, GAWLAIPAMLGGAAFLADSVL, LFDENPSLTLMITVVIIVILF, IGKVFGSMVLVWFGFLAIVGV, AAGIALMGTVFLSTTGAEALY, WPFIKVALVLNYFGQGAWMLA, AVILSVSAGVIASQALITGAF, LYIPVVNGVLCVSTLAVLAIF, YGLALTITMITTTVLLGVYLW, VGAIVFTVLFLAIQAMFFIAS, and FLHGGWFTMLLTAAILFVMYT. 2 disordered regions span residues 649–678 and 693–736; these read TDTAKTIPTPTPTRAVADPAAVPDPMDTTS and AEAR…KQKR. 2 stretches are compositionally biased toward low complexity: residues 660–677 and 700–709; these read PTRAVADPAAVPDPMDTT and EAAAADAPAE. Over residues 710–721 the composition is skewed to basic and acidic residues; it reads QGDKGDKGKAEN.

It belongs to the HAK/KUP transporter (TC 2.A.72) family.

It localises to the cell membrane. The enzyme catalyses K(+)(in) + H(+)(in) = K(+)(out) + H(+)(out). In terms of biological role, transport of potassium into the cell. Likely operates as a K(+):H(+) symporter. The chain is Probable potassium transport system protein Kup 2 from Bifidobacterium longum (strain NCC 2705).